A 757-amino-acid chain; its full sequence is Activating signal cointegrator 1 complex subunit 2 (757 aa).

T233 bears the Phosphothreonine mark. The residue at position 447 (S447) is a Phosphoserine. Positions 467–510 (ELDSLISQVKDLLPDLGEGFILACLEYYHYDPEQVINNILEERL) constitute a CUE domain. Disordered stretches follow at residues 617–687 (DDTY…VLRE) and 699–757 (KKGY…MIPS). S632 carries the phosphoserine modification. Over residues 657–670 (QEEDDDDEEDDADE) the composition is skewed to acidic residues. Residues 671 to 687 (EAPKPDHFVQDPAVLRE) show a composition bias toward basic and acidic residues. S713 carries the post-translational modification Phosphoserine. The span at 719 to 734 (QSRETTQERRKKEANK) shows a compositional bias: basic and acidic residues.

The protein belongs to the ASCC2 family. Identified in the ASCC complex that contains ASCC1, ASCC2 and ASCC3. Interacts directly with ASCC3. The ASCC complex interacts with ALKBH3. Interacts (via CUE domain) with 'Lys-63'-linked polyubiquitin chains, but not with 'Lys-48'-linked polyubiquitin chains. Part of the ASC-1 complex, that contains TRIP4, ASCC1, ASCC2 and ASCC3. Component of the RQT (ribosome quality control trigger) complex, that contains ASCC2, ASCC3 and TRIP4. Interacts with CSRP1. Interacts with PRPF8, a component of the spliceosome. Interacts with ZCCHC4. In terms of tissue distribution, ubiquitous.

Its subcellular location is the nucleus. It is found in the nucleus speckle. Ubiquitin-binding protein involved in DNA repair and rescue of stalled ribosomes. Plays a role in DNA damage repair as component of the ASCC complex. Recruits ASCC3 and ALKBH3 to sites of DNA damage by binding to polyubiquitinated proteins that have 'Lys-63'-linked polyubiquitin chains. Part of the ASC-1 complex that enhances NF-kappa-B, SRF and AP1 transactivation. Involved in activation of the ribosome quality control (RQC) pathway, a pathway that degrades nascent peptide chains during problematic translation. Specifically recognizes and binds RPS20/uS10 ubiquitinated by ZNF598, promoting recruitment of the RQT (ribosome quality control trigger) complex on stalled ribosomes, followed by disassembly of stalled ribosomes. The sequence is that of Activating signal cointegrator 1 complex subunit 2 (ASCC2) from Homo sapiens (Human).